The following is a 694-amino-acid chain: Cyclic nucleotide-gated channel beta-3 (694 aa).

The Cytoplasmic segment spans residues 1–210; the sequence is MLKSLTVKFN…SIDSYTDRVY (210 aa). Disordered stretches follow at residues 24–82 and 146–177; these read CPNL…DPEC and ENFP…KEHQ. Composition is skewed to polar residues over residues 26–40 and 153–168; these read NLSS…QGDN and ASSQ…PKQE. The chain crosses the membrane as a helical span at residues 211 to 234; the sequence is LLWLLLVTIAYNWNCWLLPVRLVF. The Extracellular portion of the chain corresponds to 235 to 241; that stretch reads PCQTPDN. A helical membrane pass occupies residues 242 to 262; sequence KNYWIITDIVCDIIYLCDILL. Residues 263–291 are Cytoplasmic-facing; sequence IQPRLQFVRGGEIIVDSNELKRNYRSSTK. A helical membrane pass occupies residues 292–309; it reads FRMDVASLLPFEVLYIFF. Topologically, residues 310–312 are extracellular; the sequence is GVN. The helical transmembrane segment at 313-327 threads the bilayer; it reads PIFRANRILKYTSFF. The Cytoplasmic segment spans residues 328-340; that stretch reads EFNHHLESIMDKA. The tract at residues 340 to 439 is ion conduction pathway; that stretch reads AYVYRVIRTT…IGQMRDVIGA (100 aa). Residues 341–363 form a helical membrane-spanning segment; the sequence is YVYRVIRTTGYLLFLLHINACVY. Over 364-385 the chain is Extracellular; it reads YWASDYEGIGSTKWVYNGEGNK. The next 2 membrane-spanning stretches (helical) occupy residues 386 to 412 and 413 to 437; these read YLRC…SFEI and VFQF…RDVI. The segment at 399-402 is selectivity filter; that stretch reads TIGG. Residues 438–694 lie on the Cytoplasmic side of the membrane; it reads GAATANQNYF…KGKRKTTTQK (257 aa). Positions 442–518 are C-linker; it reads ANQNYFQACM…SIIDKVELFK (77 aa). The tract at residues 522–638 is cyclic nucleotide-binding domain; it reads TQMIYDLLLR…LLMKKAKILL (117 aa). Residues Gly583, Glu584, Arg596, and Thr597 each coordinate 3',5'-cyclic GMP.

This sequence belongs to the cyclic nucleotide-gated cation channel (TC 1.A.1.5) family. CNGB3 subfamily. In terms of assembly, forms heterotetrameric channels composed of CNGA3 and CNGB3 subunits with 3:1 stoichiometry. Small subset of retinal photoreceptor cells and testis.

The protein localises to the cell membrane. The enzyme catalyses Ca(2+)(in) = Ca(2+)(out). It catalyses the reaction Na(+)(in) = Na(+)(out). The catalysed reaction is K(+)(in) = K(+)(out). It carries out the reaction NH4(+)(in) = NH4(+)(out). The enzyme catalyses Rb(+)(in) = Rb(+)(out). It catalyses the reaction Li(+)(in) = Li(+)(out). The catalysed reaction is Cs(+)(in) = Cs(+)(out). Pore-forming subunit of the cone cyclic nucleotide-gated channel. Mediates cone photoresponses at bright light converting transient changes in intracellular cGMP levels into electrical signals. In the dark, cGMP levels are high and keep the channel open enabling a steady inward current carried by Na(+) and Ca(2+) ions that leads to membrane depolarization and neurotransmitter release from synaptic terminals. Upon photon absorption cGMP levels decline leading to channel closure and membrane hyperpolarization that ultimately slows neurotransmitter release and signals the presence of light, the end point of the phototransduction cascade. Conducts cGMP- and cAMP-gated ion currents, with permeability for monovalent and divalent cations. The protein is Cyclic nucleotide-gated channel beta-3 of Mus musculus (Mouse).